Here is a 265-residue protein sequence, read N- to C-terminus: Anamorsin homolog 1 (265 aa).

Residues 1 to 143 are N-terminal SAM-like domain; sequence MAATAAAALA…KASWSMGSSF (143 aa). The tract at residues 144–175 is linker; sequence PLKKATKGLPKIQIDDDSELIDEDSLLTEDDL. [2Fe-2S] cluster contacts are provided by cysteine 186, cysteine 195, cysteine 198, and cysteine 200. The fe-S binding site A stretch occupies residues 186 to 200; sequence CEVGATRKACKNCTC. [4Fe-4S] cluster-binding residues include cysteine 226, cysteine 229, cysteine 237, and cysteine 240. 2 consecutive short sequence motifs (cx2C motif) follow at residues 226–229 and 237–240; these read CGNC and CGTC. The tract at residues 226–240 is fe-S binding site B; it reads CGNCGLGDAFRCGTC.

Belongs to the anamorsin family. In terms of assembly, monomer. [2Fe-2S] cluster serves as cofactor. [4Fe-4S] cluster is required as a cofactor.

The protein localises to the cytoplasm. Its subcellular location is the mitochondrion intermembrane space. Component of the cytosolic iron-sulfur (Fe-S) protein assembly (CIA) machinery. Required for the maturation of extramitochondrial Fe-S proteins. Part of an electron transfer chain functioning in an early step of cytosolic Fe-S biogenesis, facilitating the de novo assembly of a [4Fe-4S] cluster on the cytosolic Fe-S scaffold complex. Electrons are transferred from NADPH via a FAD- and FMN-containing diflavin oxidoreductase. Together with the diflavin oxidoreductase, also required for the assembly of the diferric tyrosyl radical cofactor of ribonucleotide reductase (RNR), probably by providing electrons for reduction during radical cofactor maturation in the catalytic small subunit. This is Anamorsin homolog 1 from Oryza sativa subsp. indica (Rice).